Here is a 634-residue protein sequence, read N- to C-terminus: Chaperone protein HtpG (634 aa).

An a; substrate-binding region spans residues 1–342 (MTVASHKETL…SNDLPLNISR (342 aa)). The b stretch occupies residues 343–559 (EILQNNRVID…QHDMSGYLER (217 aa)). The tract at residues 560-634 (LLKEAGQQAP…LNSLLLAMAD (75 aa)) is c.

The protein belongs to the heat shock protein 90 family. Homodimer.

Its subcellular location is the cytoplasm. In terms of biological role, molecular chaperone. Has ATPase activity. In Nitrosococcus oceani (strain ATCC 19707 / BCRC 17464 / JCM 30415 / NCIMB 11848 / C-107), this protein is Chaperone protein HtpG.